The primary structure comprises 489 residues: MSGLLPVAVYALKVPAGGLLIPAVPDAAATFRVSMAAIDPDETPEFEDGQTRPRATLKLIRPPADMDIDESDDDYEEDSEEDSDDEEINGGPSDKEKARKLKEAAALKELEDEDEDDDSEGDDENFDLKAAISKLVKGKAPATDDDEDDESDEGLELDEMVVCTLDPERHCQQPLDITVAEGERVFFKVTGTHTVYLTGNYVIPAEEGPSEYDEDEDDEDDEDDYDLSPDEDELVDMGDLLDDEEEDELDGLAHPRVTEIESDEEEAPKLVESKGKNKRTADSDEEMALDDMMAKDGKAKGADNGEPAPSKKQQKKLKKNNGEAAAVEQKKEAKVAKEGKEGKEGKEAKEAKKVQFAKNLEQGPTPSGQKPGETTTGTLGVKEVKGVKIDDKKLGKGPAAKAGNTVAMRYIGKLEDGKVFDANKKGKPFTFKLGKGEVIKGWDIGIAGMAVGGERRITIPPHLAYGKKALPGIPANSKLIFDVKLLEIK.

Disordered stretches follow at residues 40 to 157 (PDET…GLEL) and 199 to 378 (GNYV…TTGT). Residues 66-88 (MDIDESDDDYEEDSEEDSDDEEI) show a composition bias toward acidic residues. The segment covering 93 to 109 (SDKEKARKLKEAAALKE) has biased composition (basic and acidic residues). Acidic residues-rich tracts occupy residues 110-125 (LEDE…DDEN), 143-157 (TDDD…GLEL), and 208-250 (GPSE…DELD). Basic and acidic residues-rich tracts occupy residues 267–282 (APKL…RTAD), 292–303 (MMAKDGKAKGAD), and 328–353 (EQKK…EAKK). Residues 362–378 (QGPTPSGQKPGETTTGT) show a composition bias toward polar residues. The PPIase FKBP-type domain occupies 406–489 (VAMRYIGKLE…IFDVKLLEIK (84 aa)).

The protein belongs to the FKBP-type PPIase family. FKBP3/4 subfamily. Binds to histones H3 and H4.

The protein resides in the nucleus. The catalysed reaction is [protein]-peptidylproline (omega=180) = [protein]-peptidylproline (omega=0). With respect to regulation, inhibited by both FK506 and rapamycin. PPIase that acts as a histone chaperone. Histone proline isomerase that increases the rate of cis-trans isomerization at prolines on the histone H3 N-terminal tail. Proline isomerization influences H3 methylation thereby regulating gene expression. This Aspergillus fumigatus (strain ATCC MYA-4609 / CBS 101355 / FGSC A1100 / Af293) (Neosartorya fumigata) protein is FK506-binding protein 4 (fpr4).